The chain runs to 84 residues: Figainin 2 (84 aa).

A signal peptide spans 1-22 (MAFLKKSLFLVLFLGIVSLSVC). Basic and acidic residues predominate over residues 23 to 39 (EEEKREGEEKEEKREEE). The segment at 23 to 53 (EEEKREGEEKEEKREEEEGKEENEDGNEEHK) is disordered. A propeptide spanning residues 23-54 (EEEKREGEEKEEKREEEEGKEENEDGNEEHKE) is cleaved from the precursor. Residues 40–49 (EGKEENEDGN) are compositionally biased toward acidic residues.

Expressed by the skin glands.

It is found in the secreted. Antimicrobial peptide that displays antibacterial, antiprotozoal, and antiviral activity. Exhibits antibacterial activity against the Gram-positive bacteria S.epidermidis ATCC 12228 (MIC=4 uM), E.casseliflavus ATCC 700327 (MIC=4 uM), S.aureus ATCC 25923 (MIC=8 uM) and E.faecalis ATCC 29212 (MIC=8 uM), and the Gram-negative bacteria E.coli ATCC 25922 (MIC=8 uM), K.pneumoniae ATCC 13883 (MIC=8 uM), the multi-resistant clinical isolate strain K.pneumoniae carbapanemase (KPC) MR (MIC=16 uM), and P.aeruginosa ATCC 27853 (MIC=32 uM). Displays antiprotozoal activity against the epimastigote form of T.cruzi (IC(50)=6.32 uM). Does not show antimicrobial against the fungi C.albicans ATCC 90028 and C.parapsilosis ATCC 22019. Displays antiviral activity against the human viruses chikungunya (EC(50)=17.9 uM), Dengue serotype 4 (EC(50)=20.8 uM) and Yellow Fever (EC(50)=21.8 uM). Shows moderate cytolytic activity against human erythrocytes (HC(50)=48.9 uM), and activates the oxidative burst in human neutrophils. Also displays anti-proliferative effects against MCF-7 breast cancer cells (IC(50)=15.3 uM) and B16F10 murine melanoma cells (IC(50)=12.8 uM). The chain is Figainin 2 from Boana raniceps (Chaco tree frog).